Here is a 561-residue protein sequence, read N- to C-terminus: Cation diffusion facilitator family protein 1 (561 aa).

A compositionally biased stretch (basic and acidic residues) spans Met1–Asn20. Positions Met1 to Glu26 are disordered. Over Met1–Ser112 the chain is Cytoplasmic. Residues Leu113–Val133 traverse the membrane as a helical segment. Topologically, residues Cys134–Ser136 are extracellular. The helical transmembrane segment at Ile137 to Phe157 threads the bilayer. The Cytoplasmic portion of the chain corresponds to Thr158 to Arg176. Residues Ala177–Phe197 traverse the membrane as a helical segment. Topologically, residues Gln198–Gln215 are extracellular. A helical membrane pass occupies residues Val216–Gly236. Residues His237–His391 are Cytoplasmic-facing. Positions Ser240 to Ser304 are disordered. The tract at residues His246–Gly270 is 6 X 2 AA approximate repeats of H-G. Positions Gly247–Lys264 are enriched in basic residues. The chain crosses the membrane as a helical span at residues Leu392 to Leu412. Topologically, residues Pro413–Tyr420 are extracellular. A helical transmembrane segment spans residues Leu421–Val441. The Cytoplasmic segment spans residues Lys442 to Glu561.

It belongs to the cation diffusion facilitator (CDF) transporter (TC 2.A.4) family. SLC30A subfamily. As to quaternary structure, interacts with lin-45 in a zinc-dependent manner. Expressed in intestinal cells. Expressed in the vulva.

It localises to the basolateral cell membrane. In terms of biological role, involved in the regulation of Pn.p cell fate determination. Involved in zinc metabolism and the decrease of the cytosolic zinc concentration which is thought to modulate Ras signaling. Involved in zinc transport from the intestinal lumen to the pseudocoelum. The sequence is that of Cation diffusion facilitator family protein 1 (cdf-1) from Caenorhabditis elegans.